A 314-amino-acid chain; its full sequence is Probable tRNA pseudouridine synthase B (314 aa).

Positions 1–10 (MATRGRHRSR) are enriched in basic residues. The disordered stretch occupies residues 1 to 30 (MATRGRHRSRTSGTSSEPMTLRAPPDERDL). Catalysis depends on Asp72, which acts as the Nucleophile. One can recognise a PUA domain in the interval 237-314 (LPRVTIAPSA…LVVELDRMLV (78 aa)).

It belongs to the pseudouridine synthase TruB family. Type 2 subfamily.

The enzyme catalyses uridine(55) in tRNA = pseudouridine(55) in tRNA. Functionally, could be responsible for synthesis of pseudouridine from uracil-55 in the psi GC loop of transfer RNAs. This chain is Probable tRNA pseudouridine synthase B, found in Haloarcula marismortui (strain ATCC 43049 / DSM 3752 / JCM 8966 / VKM B-1809) (Halobacterium marismortui).